A 373-amino-acid polypeptide reads, in one-letter code: Enoyl-[acyl-carrier-protein] reductase, mitochondrial (373 aa).

Residues 1–53 constitute a mitochondrion transit peptide; the sequence is MLVSQRVTGARARAPQLAGLLEAWYRHGRTTSSYSALSEPSRVRALVYGNHGD. Lys61 bears the N6-acetyllysine; alternate mark. Residue Lys61 is modified to N6-succinyllysine; alternate. Tyr94 acts as the Proton donor in catalysis. Residues Asn167, 193–196, and 216–218 each bind NADP(+); these read NSGV and RDR. Lys252 and Lys267 each carry N6-acetyllysine; alternate. Lys252 and Lys267 each carry N6-succinyllysine; alternate. NADP(+) contacts are provided by residues 285–288 and 310–312; these read YGGM and FWL. Lys316 bears the N6-succinyllysine mark. NADP(+) is bound at residue Lys368.

The protein belongs to the zinc-containing alcohol dehydrogenase family. Quinone oxidoreductase subfamily. In terms of assembly, homodimer. As to expression, expressed in Purkinje cells (at protein level).

The protein localises to the mitochondrion. The catalysed reaction is a 2,3-saturated acyl-[ACP] + NADP(+) = a (2E)-enoyl-[ACP] + NADPH + H(+). It carries out the reaction (2E)-butenoyl-[ACP] + NADPH + H(+) = butanoyl-[ACP] + NADP(+). It catalyses the reaction (2E)-hexenoyl-[ACP] + NADPH + H(+) = hexanoyl-[ACP] + NADP(+). The enzyme catalyses (2E)-octenoyl-[ACP] + NADPH + H(+) = octanoyl-[ACP] + NADP(+). The catalysed reaction is (2E)-decenoyl-[ACP] + NADPH + H(+) = decanoyl-[ACP] + NADP(+). It carries out the reaction (2E)-dodecenoyl-[ACP] + NADPH + H(+) = dodecanoyl-[ACP] + NADP(+). It catalyses the reaction (2E)-tetradecenoyl-[ACP] + NADPH + H(+) = tetradecanoyl-[ACP] + NADP(+). The enzyme catalyses (2E)-hexadecenoyl-[ACP] + NADPH + H(+) = hexadecanoyl-[ACP] + NADP(+). Its function is as follows. Catalyzes the NADPH-dependent reduction of trans-2-enoyl thioesters in mitochondrial fatty acid synthesis (fatty acid synthesis type II). Fatty acid chain elongation in mitochondria uses acyl carrier protein (ACP) as an acyl group carrier, but the enzyme accepts both ACP and CoA thioesters as substrates in vitro. Displays a preference for medium-chain over short- and long-chain substrates. May provide the octanoyl chain used for lipoic acid biosynthesis, regulating protein lipoylation and mitochondrial respiratory activity particularly in Purkinje cells. Involved in iron homeostasis; affecting Fe-S cluster assembly and ceramide metabolism. Required for proper morphology and bioenergetic functions of mitochondria. Required for maintenance of neurons. The chain is Enoyl-[acyl-carrier-protein] reductase, mitochondrial (Mecr) from Mus musculus (Mouse).